Reading from the N-terminus, the 584-residue chain is Chondroitin proteoglycan 1 (584 aa).

An N-terminal signal peptide occupies residues 1–17; that stretch reads MTLKPVLLAFLVASAYA. O-linked (Xyl...) (chondroitin sulfate) serine glycosylation occurs at Ser50. 3 consecutive Chitin-binding type-2 domains span residues 58-115, 211-268, and 524-578; these read DTDC…QCGG, TKSC…ECTN, and VPAC…ECHQ. 2 cysteine pairs are disulfide-bonded: Cys91–Cys104 and Cys244–Cys257. The segment at 267–295 is disordered; that stretch reads TNGSGNDEGSADETTPESSGEMPYSNGYG. An N-linked (GlcNAc...) asparagine glycan is attached at Asn268. Cysteines 554 and 567 form a disulfide.

Expressed in the germline.

Its function is as follows. Required for polar body extrusion during cytokinesis in embryo development. Affects cortical granule size. Has roles in meiotic chromosome segregation, osmotic barrier function and polarization in conjunction with cpg-2. Binds chitin. This chain is Chondroitin proteoglycan 1 (cpg-1), found in Caenorhabditis elegans.